A 479-amino-acid chain; its full sequence is Aspartyl/glutamyl-tRNA(Asn/Gln) amidotransferase subunit B (479 aa).

The protein belongs to the GatB/GatE family. GatB subfamily. In terms of assembly, heterotrimer of A, B and C subunits.

The catalysed reaction is L-glutamyl-tRNA(Gln) + L-glutamine + ATP + H2O = L-glutaminyl-tRNA(Gln) + L-glutamate + ADP + phosphate + H(+). The enzyme catalyses L-aspartyl-tRNA(Asn) + L-glutamine + ATP + H2O = L-asparaginyl-tRNA(Asn) + L-glutamate + ADP + phosphate + 2 H(+). Its function is as follows. Allows the formation of correctly charged Asn-tRNA(Asn) or Gln-tRNA(Gln) through the transamidation of misacylated Asp-tRNA(Asn) or Glu-tRNA(Gln) in organisms which lack either or both of asparaginyl-tRNA or glutaminyl-tRNA synthetases. The reaction takes place in the presence of glutamine and ATP through an activated phospho-Asp-tRNA(Asn) or phospho-Glu-tRNA(Gln). This chain is Aspartyl/glutamyl-tRNA(Asn/Gln) amidotransferase subunit B, found in Geotalea daltonii (strain DSM 22248 / JCM 15807 / FRC-32) (Geobacter daltonii).